The sequence spans 481 residues: uncharacterized protein (481 aa).

The protein to M.tuberculosis RV2411c.

This is an uncharacterized protein from Synechocystis sp. (strain ATCC 27184 / PCC 6803 / Kazusa).